A 322-amino-acid chain; its full sequence is Ferrochelatase (322 aa).

The Fe cation site is built by H193 and E274.

The protein belongs to the ferrochelatase family.

The protein resides in the cytoplasm. The catalysed reaction is heme b + 2 H(+) = protoporphyrin IX + Fe(2+). It functions in the pathway porphyrin-containing compound metabolism; protoheme biosynthesis; protoheme from protoporphyrin-IX: step 1/1. Its function is as follows. Catalyzes the ferrous insertion into protoporphyrin IX. The polypeptide is Ferrochelatase (Aliivibrio fischeri (strain MJ11) (Vibrio fischeri)).